The following is a 94-amino-acid chain: Pyrimidine/purine nucleoside phosphorylase (94 aa).

It belongs to the nucleoside phosphorylase PpnP family.

The enzyme catalyses a purine D-ribonucleoside + phosphate = a purine nucleobase + alpha-D-ribose 1-phosphate. The catalysed reaction is adenosine + phosphate = alpha-D-ribose 1-phosphate + adenine. It carries out the reaction cytidine + phosphate = cytosine + alpha-D-ribose 1-phosphate. It catalyses the reaction guanosine + phosphate = alpha-D-ribose 1-phosphate + guanine. The enzyme catalyses inosine + phosphate = alpha-D-ribose 1-phosphate + hypoxanthine. The catalysed reaction is thymidine + phosphate = 2-deoxy-alpha-D-ribose 1-phosphate + thymine. It carries out the reaction uridine + phosphate = alpha-D-ribose 1-phosphate + uracil. It catalyses the reaction xanthosine + phosphate = alpha-D-ribose 1-phosphate + xanthine. In terms of biological role, catalyzes the phosphorolysis of diverse nucleosides, yielding D-ribose 1-phosphate and the respective free bases. Can use uridine, adenosine, guanosine, cytidine, thymidine, inosine and xanthosine as substrates. Also catalyzes the reverse reactions. This Pseudomonas putida (strain ATCC 700007 / DSM 6899 / JCM 31910 / BCRC 17059 / LMG 24140 / F1) protein is Pyrimidine/purine nucleoside phosphorylase.